A 246-amino-acid polypeptide reads, in one-letter code: Acetoacetate decarboxylase (246 aa).

The Schiff-base intermediate with acetoacetate role is filled by Lys116.

Belongs to the ADC family.

It catalyses the reaction acetoacetate + H(+) = acetone + CO2. Catalyzes the conversion of acetoacetate to acetone and carbon dioxide. The sequence is that of Acetoacetate decarboxylase from Clostridium botulinum (strain Eklund 17B / Type B).